We begin with the raw amino-acid sequence, 239 residues long: Transcriptional regulatory protein BtsR (239 aa).

The region spanning 3-116 (KVLIVDDEPL…RLEKTLARLR (114 aa)) is the Response regulatory domain. 4-aspartylphosphate is present on Asp-54. An HTH LytTR-type domain is found at 137 to 239 (IPCTGHSRIY…LKSLKEAIGL (103 aa)).

In terms of processing, phosphorylated by BtsS.

Its function is as follows. Member of the two-component regulatory system BtsS/BtsR. BtsR regulates expression of btsT by binding to its promoter region. The polypeptide is Transcriptional regulatory protein BtsR (Escherichia coli O6:H1 (strain CFT073 / ATCC 700928 / UPEC)).